Here is a 125-residue protein sequence, read N- to C-terminus: Succinate dehydrogenase cytochrome b560 subunit (125 aa).

3 helical membrane-spanning segments follow: residues 29–49 (ISGV…KLAT), 68–88 (ILPW…INGI), and 104–124 (IIKD…FKFI). Residue His83 coordinates heme.

This sequence belongs to the cytochrome b560 family. As to quaternary structure, forms part of complex II containing four subunits: a 70 kDa flavoprotein (FP), a 27 kDa iron-sulfur protein (IP), a cytochrome B and a membrane-anchoring protein. Heme serves as cofactor.

Its subcellular location is the mitochondrion inner membrane. The protein operates within carbohydrate metabolism; tricarboxylic acid cycle. Its function is as follows. Membrane-anchoring subunit of succinate dehydrogenase (SDH) that is involved in complex II of the mitochondrial electron transport chain and is responsible for transferring electrons from succinate to ubiquinone (coenzyme Q). This is Succinate dehydrogenase cytochrome b560 subunit (SDH3) from Porphyra purpurea (Red seaweed).